The sequence spans 523 residues: Probable malate:quinone oxidoreductase (523 aa).

Belongs to the MQO family. The cofactor is FAD.

The catalysed reaction is (S)-malate + a quinone = a quinol + oxaloacetate. The protein operates within carbohydrate metabolism; tricarboxylic acid cycle; oxaloacetate from (S)-malate (quinone route): step 1/1. The polypeptide is Probable malate:quinone oxidoreductase (Agrobacterium fabrum (strain C58 / ATCC 33970) (Agrobacterium tumefaciens (strain C58))).